The following is a 239-amino-acid chain: Non-classical arabinogalactan protein 30 (239 aa).

The signal sequence occupies residues 1-24 (MGIIGKSVSLTLFALLCFTSSVFT). A glycan (N-linked (GlcNAc...) asparagine) is linked at Asn-106.

This sequence belongs to the non-classical AGP family. In terms of tissue distribution, specifically expressed in root tips.

It localises to the secreted. The protein resides in the cell wall. Proteoglycan required for the timing of seed germination. May function in the abscisic acid (ABA) response. The sequence is that of Non-classical arabinogalactan protein 30 from Arabidopsis thaliana (Mouse-ear cress).